The following is a 263-amino-acid chain: Outer membrane lipoprotein 3 (263 aa).

The first 19 residues, 1–19 (MKIMKLAGAVAIFSLFLTA), serve as a signal peptide directing secretion. Cys20 carries N-palmitoyl cysteine lipidation. Cys20 carries the S-diacylglycerol cysteine lipid modification.

It belongs to the NlpA lipoprotein family.

It is found in the cell outer membrane. The polypeptide is Outer membrane lipoprotein 3 (plpC) (Mannheimia haemolytica (Pasteurella haemolytica)).